The chain runs to 78 residues: Acyl carrier protein (78 aa).

The Carrier domain maps to 2–77; the sequence is STIEERVKKI…EAIDYVTAHA (76 aa). Ser-37 carries the O-(pantetheine 4'-phosphoryl)serine modification.

Belongs to the acyl carrier protein (ACP) family. In terms of processing, 4'-phosphopantetheine is transferred from CoA to a specific serine of apo-ACP by AcpS. This modification is essential for activity because fatty acids are bound in thioester linkage to the sulfhydryl of the prosthetic group.

The protein resides in the cytoplasm. It functions in the pathway lipid metabolism; fatty acid biosynthesis. Its function is as follows. Carrier of the growing fatty acid chain in fatty acid biosynthesis. The sequence is that of Acyl carrier protein from Ectopseudomonas mendocina (strain ymp) (Pseudomonas mendocina).